A 292-amino-acid polypeptide reads, in one-letter code: Elongation factor Ts (292 aa).

The segment at 80-83 is involved in Mg(2+) ion dislocation from EF-Tu; it reads TDFV.

It belongs to the EF-Ts family.

The protein resides in the cytoplasm. In terms of biological role, associates with the EF-Tu.GDP complex and induces the exchange of GDP to GTP. It remains bound to the aminoacyl-tRNA.EF-Tu.GTP complex up to the GTP hydrolysis stage on the ribosome. The protein is Elongation factor Ts of Psychrobacter sp. (strain PRwf-1).